A 26-amino-acid polypeptide reads, in one-letter code: Citropin-2.1.3 (26 aa).

In terms of tissue distribution, expressed by the dorsal and submental skin glands.

The protein resides in the secreted. This Ranoidea citropa (Australian Blue Mountains tree frog) protein is Citropin-2.1.3.